The chain runs to 268 residues: Tryptophan synthase alpha chain (268 aa).

Residues E49 and D60 each act as proton acceptor in the active site.

The protein belongs to the TrpA family. Tetramer of two alpha and two beta chains.

It carries out the reaction (1S,2R)-1-C-(indol-3-yl)glycerol 3-phosphate + L-serine = D-glyceraldehyde 3-phosphate + L-tryptophan + H2O. It functions in the pathway amino-acid biosynthesis; L-tryptophan biosynthesis; L-tryptophan from chorismate: step 5/5. In terms of biological role, the alpha subunit is responsible for the aldol cleavage of indoleglycerol phosphate to indole and glyceraldehyde 3-phosphate. The sequence is that of Tryptophan synthase alpha chain from Dechloromonas aromatica (strain RCB).